Consider the following 209-residue polypeptide: Thymidine kinase (209 aa).

ATP-binding positions include 9-16 and 88-91; these read SAMNAGKT and DEAQ. E89 serves as the catalytic Proton acceptor.

This sequence belongs to the thymidine kinase family. In terms of assembly, homotetramer.

Its subcellular location is the cytoplasm. It carries out the reaction thymidine + ATP = dTMP + ADP + H(+). This Xanthomonas campestris pv. campestris (strain 8004) protein is Thymidine kinase.